Consider the following 322-residue polypeptide: Transaldolase (322 aa).

The active-site Schiff-base intermediate with substrate is Lys-136.

This sequence belongs to the transaldolase family. Type 1 subfamily. As to quaternary structure, homodimer.

It localises to the cytoplasm. The catalysed reaction is D-sedoheptulose 7-phosphate + D-glyceraldehyde 3-phosphate = D-erythrose 4-phosphate + beta-D-fructose 6-phosphate. It participates in carbohydrate degradation; pentose phosphate pathway; D-glyceraldehyde 3-phosphate and beta-D-fructose 6-phosphate from D-ribose 5-phosphate and D-xylulose 5-phosphate (non-oxidative stage): step 2/3. Transaldolase is important for the balance of metabolites in the pentose-phosphate pathway. This is Transaldolase from Xanthomonas oryzae pv. oryzae (strain MAFF 311018).